The following is a 396-amino-acid chain: UPF0164 protein TP_0858 (396 aa).

An N-terminal signal peptide occupies residues 1 to 28 (MGTMIRHTFTHRCGALLCALALGSSTMA).

The protein belongs to the UPF0164 family.

The sequence is that of UPF0164 protein TP_0858 from Treponema pallidum (strain Nichols).